The sequence spans 128 residues: uncharacterized protein (128 aa).

Transmembrane regions (helical) follow at residues 33-53 (LLYISIIFLFLNYVVDIVCYV) and 61-81 (FFCWVFLNLGVIGIIITVIIY). Polar residues predominate over residues 99–120 (DSLNQNVGESQSNEPPKYTSTF). The disordered stretch occupies residues 99-128 (DSLNQNVGESQSNEPPKYTSTFMDELDKQD).

Its subcellular location is the membrane. This is an uncharacterized protein from Schizosaccharomyces pombe (strain 972 / ATCC 24843) (Fission yeast).